The following is a 322-amino-acid chain: tRNA uridine(34) hydroxylase (322 aa).

Positions 125-219 (QDPNTIVIDA…YGKDPEVQGK (95 aa)) constitute a Rhodanese domain. Cysteine 179 acts as the Cysteine persulfide intermediate in catalysis.

Belongs to the TrhO family.

It catalyses the reaction uridine(34) in tRNA + AH2 + O2 = 5-hydroxyuridine(34) in tRNA + A + H2O. In terms of biological role, catalyzes oxygen-dependent 5-hydroxyuridine (ho5U) modification at position 34 in tRNAs. The chain is tRNA uridine(34) hydroxylase from Bacillus subtilis (strain 168).